The sequence spans 473 residues: ATP synthase subunit beta (473 aa).

158–165 (GGAGVGKT) contacts ATP.

It belongs to the ATPase alpha/beta chains family. As to quaternary structure, F-type ATPases have 2 components, CF(1) - the catalytic core - and CF(0) - the membrane proton channel. CF(1) has five subunits: alpha(3), beta(3), gamma(1), delta(1), epsilon(1). CF(0) has three main subunits: a(1), b(2) and c(9-12). The alpha and beta chains form an alternating ring which encloses part of the gamma chain. CF(1) is attached to CF(0) by a central stalk formed by the gamma and epsilon chains, while a peripheral stalk is formed by the delta and b chains.

The protein localises to the cell membrane. The catalysed reaction is ATP + H2O + 4 H(+)(in) = ADP + phosphate + 5 H(+)(out). Functionally, produces ATP from ADP in the presence of a proton gradient across the membrane. The catalytic sites are hosted primarily by the beta subunits. The protein is ATP synthase subunit beta of Priestia megaterium (strain ATCC 12872 / QMB1551) (Bacillus megaterium).